The primary structure comprises 356 residues: DNA polymerase IV (356 aa).

The 182-residue stretch at 7-188 (IIHIDMDAFY…IPVTKFYGVG (182 aa)) folds into the UmuC domain. D11 and D106 together coordinate Mg(2+). E107 is an active-site residue.

The protein belongs to the DNA polymerase type-Y family. In terms of assembly, monomer. The cofactor is Mg(2+).

The protein resides in the cytoplasm. The catalysed reaction is DNA(n) + a 2'-deoxyribonucleoside 5'-triphosphate = DNA(n+1) + diphosphate. Its function is as follows. Poorly processive, error-prone DNA polymerase involved in untargeted mutagenesis. Copies undamaged DNA at stalled replication forks, which arise in vivo from mismatched or misaligned primer ends. These misaligned primers can be extended by PolIV. Exhibits no 3'-5' exonuclease (proofreading) activity. May be involved in translesional synthesis, in conjunction with the beta clamp from PolIII. The polypeptide is DNA polymerase IV (Listeria monocytogenes serotype 4b (strain CLIP80459)).